The following is a 247-amino-acid chain: UDP-2,3-diacylglucosamine hydrolase (247 aa).

The Mn(2+) site is built by Asp-8, His-10, Asp-41, Asn-79, and His-114. 79–80 (NR) contributes to the substrate binding site. Asp-122, Ser-160, Asp-171, Gln-174, and His-202 together coordinate substrate. Mn(2+)-binding residues include His-202 and His-204.

It belongs to the LpxH family. It depends on Mn(2+) as a cofactor.

It is found in the cell inner membrane. It carries out the reaction UDP-2-N,3-O-bis[(3R)-3-hydroxytetradecanoyl]-alpha-D-glucosamine + H2O = 2-N,3-O-bis[(3R)-3-hydroxytetradecanoyl]-alpha-D-glucosaminyl 1-phosphate + UMP + 2 H(+). It functions in the pathway glycolipid biosynthesis; lipid IV(A) biosynthesis; lipid IV(A) from (3R)-3-hydroxytetradecanoyl-[acyl-carrier-protein] and UDP-N-acetyl-alpha-D-glucosamine: step 4/6. Functionally, hydrolyzes the pyrophosphate bond of UDP-2,3-diacylglucosamine to yield 2,3-diacylglucosamine 1-phosphate (lipid X) and UMP by catalyzing the attack of water at the alpha-P atom. Involved in the biosynthesis of lipid A, a phosphorylated glycolipid that anchors the lipopolysaccharide to the outer membrane of the cell. This is UDP-2,3-diacylglucosamine hydrolase from Xanthomonas campestris pv. campestris (strain B100).